The chain runs to 282 residues: Pantothenate synthetase (282 aa).

31–38 provides a ligand contact to ATP; the sequence is MGYLHEGH. His-38 serves as the catalytic Proton donor. (R)-pantoate is bound at residue Gln-62. Gln-62 serves as a coordination point for beta-alanine. Residue 148-151 coordinates ATP; the sequence is GEKD. Gln-154 is a binding site for (R)-pantoate. Residues Val-177 and 185–188 each bind ATP; that span reads YSSR.

Belongs to the pantothenate synthetase family. In terms of assembly, homodimer.

It is found in the cytoplasm. It carries out the reaction (R)-pantoate + beta-alanine + ATP = (R)-pantothenate + AMP + diphosphate + H(+). The protein operates within cofactor biosynthesis; (R)-pantothenate biosynthesis; (R)-pantothenate from (R)-pantoate and beta-alanine: step 1/1. In terms of biological role, catalyzes the condensation of pantoate with beta-alanine in an ATP-dependent reaction via a pantoyl-adenylate intermediate. The polypeptide is Pantothenate synthetase (Aquifex aeolicus (strain VF5)).